The chain runs to 206 residues: Ras-related protein Rab7 (206 aa).

GTP contacts are provided by residues 15–22 (GDSGVGKT), 63–67 (DTAGQ), and 125–128 (NKID). S-geranylgeranyl cysteine attachment occurs at residues Cys-204 and Cys-206. The residue at position 206 (Cys-206) is a Cysteine methyl ester.

It belongs to the small GTPase superfamily. Rab family.

It localises to the cell membrane. Functionally, protein transport. Probably involved in vesicular traffic. The chain is Ras-related protein Rab7 from Pisum sativum (Garden pea).